A 615-amino-acid polypeptide reads, in one-letter code: MPIQVLPPQLANQIAAGEVVERPASVVKELVENSLDAGATRIDIDIERGGAKLIRIRDNGCGIKKDELALALARHATSKIASLDDLEAIISLGFRGEALASISSVSRLTLTSRTAEQQEAWQAYAEGRDMDVTVKPAAHPVGTTLEVLDLFYNTPARRKFLRTEKTEFNHIDEIIRRIALARFDVTINLSHNGKIVRQYRAVPEGGQKERRLGAICGTAFLEQALAIEWQHCDLTLRGWVADPNHTTPALAEIQYCYVNGRMMRDRLINHAIRQACEDKLGADQQPAFVLYLEIDPHQVDVNVHPAKHEVRFHQSRLVHDFIYQGVLSVLQQQLETPLPLDDEPQPAPRAIPENRVAAGRNHFAEPAVREPVAPRYTPAPASGSRPAAPWPNTQPGYQKQQGEVYRQLLQTPAPMQKPKAPEPQEPALAANSQSFGRVLTIVHSDCALLERDGNISLLALPAAERWLRQAQLTPGEAPVCAQPLLIPLRLKVSGEEKSALEKAQSALAELGIDFQSDAQHVTIRAVPLPLRQQNLQILIPELIGYLAKQSVFEPGNIAQWIARNLMSEHAQWSMAQAITLLADVERLCPQLVKTPPGGLLQSVDLHPAIKALKDE.

Positions 370–397 are disordered; sequence EPVAPRYTPAPASGSRPAAPWPNTQPGY. A compositionally biased stretch (low complexity) spans 378-391; the sequence is PAPASGSRPAAPWP.

The protein belongs to the DNA mismatch repair MutL/HexB family.

Functionally, this protein is involved in the repair of mismatches in DNA. It is required for dam-dependent methyl-directed DNA mismatch repair. May act as a 'molecular matchmaker', a protein that promotes the formation of a stable complex between two or more DNA-binding proteins in an ATP-dependent manner without itself being part of a final effector complex. The chain is DNA mismatch repair protein MutL from Shigella dysenteriae serotype 1 (strain Sd197).